The chain runs to 686 residues: Soluble guanylate cyclase gcy-34 (686 aa).

Position 105 (His-105) interacts with heme. Coiled-coil stretches lie at residues 306–335 (KKHMNAMTKEEREQEVEAMEEEVESNELTQ) and 398–432 (VEVNLQLEANNEQLETMTHELEVERQKTDSILKDM). The Guanylate cyclase domain maps to 455 to 583 (TVMFCDLPAF…ETVTLASQME (129 aa)). 2 residues coordinate Mg(2+): Asp-460 and Asp-504.

The protein belongs to the adenylyl cyclase class-4/guanylyl cyclase family. In terms of assembly, heterodimer; with other soluble guanylate cyclases. Heme is required as a cofactor. As to expression, expressed in a small number of neurons, corresponding to URX, AQR and PQR neurons.

It is found in the cytoplasm. It catalyses the reaction GTP = 3',5'-cyclic GMP + diphosphate. May be regulated by molecular oxygen. Probably not activated by nitric oxide (NO). Its function is as follows. Synthesizes cyclic GMP (cGMP) from GTP. May be involved in sensitivity to quinine by regulating egl-4 activity through the production of cGMP. The protein is Soluble guanylate cyclase gcy-34 (gcy-34) of Caenorhabditis elegans.